The sequence spans 517 residues: GMP synthase [glutamine-hydrolyzing] (517 aa).

Positions 11–202 (KIIALDFGSQ…AFDVCGAKAN (192 aa)) constitute a Glutamine amidotransferase type-1 domain. The Nucleophile role is filled by Cys88. Catalysis depends on residues His176 and Glu178. The GMPS ATP-PPase domain occupies 203–392 (WTMDDFIDMQ…LGIPHELVWR (190 aa)). 230-236 (SGGVDSS) contributes to the ATP binding site.

As to quaternary structure, homodimer.

The enzyme catalyses XMP + L-glutamine + ATP + H2O = GMP + L-glutamate + AMP + diphosphate + 2 H(+). The protein operates within purine metabolism; GMP biosynthesis; GMP from XMP (L-Gln route): step 1/1. Functionally, catalyzes the synthesis of GMP from XMP. The polypeptide is GMP synthase [glutamine-hydrolyzing] (Limosilactobacillus reuteri (strain DSM 20016) (Lactobacillus reuteri)).